A 686-amino-acid chain; its full sequence is Pentatricopeptide repeat-containing protein At4g08210 (686 aa).

18 PPR repeats span residues Asp-4–Gln-38, Asn-39–Arg-69, Asn-70–Ala-104, Asn-106–Gly-140, Asp-141–Pro-171, Ser-172–Ser-206, Trp-207–Leu-236, Asp-237–Ser-271, Ser-272–Ala-302, Ser-306–Phe-340, Asp-341–Leu-375, Asp-376–Lys-406, Asp-407–Ala-441, Asp-442–Ser-476, Glu-477–Arg-507, Asp-508–Pro-542, Asn-543–Glu-573, and Tyr-579–Glu-609. The segment at Ile-614 to Ile-686 is type E motif; degenerate.

The protein belongs to the PPR family. PCMP-E subfamily.

The chain is Pentatricopeptide repeat-containing protein At4g08210 (PCMP-E100) from Arabidopsis thaliana (Mouse-ear cress).